The chain runs to 300 residues: Shikimate kinase, chloroplastic (300 aa).

A chloroplast-targeting transit peptide spans M1–S65. An ATP-binding site is contributed by G111–T118. T118 lines the Mg(2+) pocket. Substrate-binding residues include D136, R161, and G183. R222 provides a ligand contact to ATP.

The protein belongs to the shikimate kinase family. Mg(2+) serves as cofactor.

The protein localises to the plastid. It is found in the chloroplast. The enzyme catalyses shikimate + ATP = 3-phosphoshikimate + ADP + H(+). Its pathway is metabolic intermediate biosynthesis; chorismate biosynthesis; chorismate from D-erythrose 4-phosphate and phosphoenolpyruvate: step 5/7. Functionally, catalyzes the specific phosphorylation of the 3-hydroxyl group of shikimic acid using ATP as a cosubstrate. The protein is Shikimate kinase, chloroplastic (SK) of Solanum lycopersicum (Tomato).